Consider the following 187-residue polypeptide: MILSDRDIRSAIDSGHLGISPFDPTMVQPSSIDVRLDRYFRVFNNARYTHIDPKQEQEDLTSLVEVKEGDAFILHPGEFVLGSTLEEFALPADLAGRLEGKSSLGRLGLLTHSTAGFIDPGFNGYITFELSNASNLPIALYPEMKVGQLALFMMSSPAETPYGSGSLGSKYQGQRGPTASKAYMNFR.

DCTP contacts are provided by residues 101 to 106 (KSSLGR) and Asp119. The Proton donor/acceptor role is filled by Glu129. Positions 148, 162, and 174 each coordinate dCTP.

The protein belongs to the dCTP deaminase family. As to quaternary structure, homotrimer.

It carries out the reaction dCTP + 2 H2O = dUMP + NH4(+) + diphosphate. It functions in the pathway pyrimidine metabolism; dUMP biosynthesis; dUMP from dCTP: step 1/1. Its function is as follows. Bifunctional enzyme that catalyzes both the deamination of dCTP to dUTP and the hydrolysis of dUTP to dUMP without releasing the toxic dUTP intermediate. The polypeptide is dCTP deaminase, dUMP-forming (Corynebacterium kroppenstedtii (strain DSM 44385 / JCM 11950 / CIP 105744 / CCUG 35717)).